The sequence spans 215 residues: Nucleoredoxin-like protein 1 (215 aa).

The 165-residue stretch at 1–165 (MADLFLDKIL…VSEIIDRSFL (165 aa)) folds into the Thioredoxin; atypical domain. Residues 185-194 (IKYKDETTNE) show a composition bias toward basic and acidic residues. The interval 185–215 (IKYKDETTNEKKKRKHCDDEDEGGGGGTEFF) is disordered.

Belongs to the nucleoredoxin family.

The protein resides in the cell projection. The protein localises to the cilium. Its subcellular location is the photoreceptor outer segment. Its function is as follows. Plays an important role in retinal cone photoreceptor survival. May play a role in cone cell viability, slowing down cone degeneration, does not seem to play a role in degenerating rods. This is Nucleoredoxin-like protein 1 (nxnl1) from Xenopus laevis (African clawed frog).